A 371-amino-acid polypeptide reads, in one-letter code: o-succinylbenzoate synthase (371 aa).

Lysine 164 serves as the catalytic Proton donor. The Mg(2+) site is built by aspartate 189, glutamate 214, and aspartate 239. The active-site Proton acceptor is lysine 263.

Belongs to the mandelate racemase/muconate lactonizing enzyme family. MenC type 2 subfamily. It depends on a divalent metal cation as a cofactor.

The catalysed reaction is (1R,6R)-6-hydroxy-2-succinyl-cyclohexa-2,4-diene-1-carboxylate = 2-succinylbenzoate + H2O. The protein operates within quinol/quinone metabolism; 1,4-dihydroxy-2-naphthoate biosynthesis; 1,4-dihydroxy-2-naphthoate from chorismate: step 4/7. Its pathway is quinol/quinone metabolism; menaquinone biosynthesis. Functionally, converts 2-succinyl-6-hydroxy-2,4-cyclohexadiene-1-carboxylate (SHCHC) to 2-succinylbenzoate (OSB). Does not show detectable N-acylamino acid racemase (NAAAR) activity with N-acetyl-S-methionine as substrate. This Bacillus subtilis (strain 168) protein is o-succinylbenzoate synthase.